A 274-amino-acid chain; its full sequence is 3',5'-cyclic adenosine monophosphate phosphodiesterase CpdA (274 aa).

7 residues coordinate Fe cation: D21, H23, D63, N93, H163, H202, and H204. AMP-binding positions include H23, D63, and 93–94 (NH). H204 lines the AMP pocket.

The protein belongs to the cyclic nucleotide phosphodiesterase class-III family. Fe(2+) is required as a cofactor.

It carries out the reaction 3',5'-cyclic AMP + H2O = AMP + H(+). Functionally, hydrolyzes cAMP to 5'-AMP. Plays an important regulatory role in modulating the intracellular concentration of cAMP, thereby influencing cAMP-dependent processes. May coordinate responses to nutritional stress, ensuring optimal competence development. This is 3',5'-cyclic adenosine monophosphate phosphodiesterase CpdA from Haemophilus influenzae (strain ATCC 51907 / DSM 11121 / KW20 / Rd).